A 397-amino-acid polypeptide reads, in one-letter code: MLNNKRLFTSESVTEGHPDKIADQVSDAILDAILKDDPNARVACETTVTTGMALIAGEISTTTYVDIPKVVRETIKEIGYTRAKYGYDYETMAILTAIDEQSPDIAQGVDKALEYRDKDSEEEIEATGAGDQGLMFGYATNETETYMPLAIYLSHQLAKRLSDVRKDGTLNYLRPDGKVQVTVEYDENDNPVRIDTIVVSTQHAEDVTLEQIQEDIKAHVIYPTVPENLINEQTKFYINPTGRFVIGGPQGDAGLTGRKIIVDTYGGYARHGGGCFSGKDPTKVDRSAAYAARYVAKNIVAAGLADQCEVQLAYAIGVAEPVSIAIDTFGTGKVSEGQLVEAVRKHFDLRPAGIIKMLDLKQPIYKQTAAYGHFGRTDVLFPWEKLDKVEELKDAVK.

ATP is bound at residue His-17. A Mg(2+)-binding site is contributed by Asp-19. Glu-45 contacts K(+). Residues Glu-58 and Gln-101 each coordinate L-methionine. The tract at residues 101–111 is flexible loop; sequence QSPDIAQGVDK. ATP is bound by residues 176–178, 243–244, Asp-252, 258–259, and Lys-279; these read DGK, RF, and RK. Asp-252 provides a ligand contact to L-methionine. Lys-283 is a binding site for L-methionine.

Belongs to the AdoMet synthase family. Homotetramer; dimer of dimers. Requires Mg(2+) as cofactor. The cofactor is K(+).

The protein resides in the cytoplasm. The enzyme catalyses L-methionine + ATP + H2O = S-adenosyl-L-methionine + phosphate + diphosphate. It participates in amino-acid biosynthesis; S-adenosyl-L-methionine biosynthesis; S-adenosyl-L-methionine from L-methionine: step 1/1. Catalyzes the formation of S-adenosylmethionine (AdoMet) from methionine and ATP. The overall synthetic reaction is composed of two sequential steps, AdoMet formation and the subsequent tripolyphosphate hydrolysis which occurs prior to release of AdoMet from the enzyme. This Staphylococcus aureus (strain USA300) protein is S-adenosylmethionine synthase.